Reading from the N-terminus, the 396-residue chain is Argininosuccinate synthase (396 aa).

Residues 10–18 (AYSGGLDTS) and Ala-37 each bind ATP. The L-citrulline site is built by Tyr-88 and Ser-93. Gly-118 serves as a coordination point for ATP. Residues Thr-120, Asn-124, and Asp-125 each coordinate L-aspartate. Asn-124 serves as a coordination point for L-citrulline. L-citrulline-binding residues include Arg-128, Ser-176, Ser-185, Glu-261, and Tyr-273.

The protein belongs to the argininosuccinate synthase family. Type 1 subfamily. As to quaternary structure, homotetramer.

Its subcellular location is the cytoplasm. It carries out the reaction L-citrulline + L-aspartate + ATP = 2-(N(omega)-L-arginino)succinate + AMP + diphosphate + H(+). It participates in amino-acid biosynthesis; L-arginine biosynthesis; L-arginine from L-ornithine and carbamoyl phosphate: step 2/3. In Nitratidesulfovibrio vulgaris (strain ATCC 29579 / DSM 644 / CCUG 34227 / NCIMB 8303 / VKM B-1760 / Hildenborough) (Desulfovibrio vulgaris), this protein is Argininosuccinate synthase.